The primary structure comprises 196 residues: tRNA(Phe) 7-((3-amino-3-carboxypropyl)-4-demethylwyosine(37)-N(4))-methyltransferase 1 (196 aa).

The protein belongs to the TYW3 family.

It catalyses the reaction 4-demethyl-7-[(3S)-3-amino-3-carboxypropyl]wyosine(37) in tRNA(Phe) + S-adenosyl-L-methionine = 7-[(3S)-3-amino-3-carboxypropyl]wyosine(37) in tRNA(Phe) + S-adenosyl-L-homocysteine + H(+). Its function is as follows. S-adenosyl-L-methionine-dependent methyltransferase that acts as a component of the wyosine derivatives biosynthesis pathway. Probably methylates N-4 position of wybutosine-86 to produce wybutosine-72. The polypeptide is tRNA(Phe) 7-((3-amino-3-carboxypropyl)-4-demethylwyosine(37)-N(4))-methyltransferase 1 (Pyrococcus furiosus (strain ATCC 43587 / DSM 3638 / JCM 8422 / Vc1)).